A 272-amino-acid chain; its full sequence is D-aminoacyl-tRNA deacylase (272 aa).

It belongs to the DtdA deacylase family. As to quaternary structure, monomer. Zn(2+) is required as a cofactor.

The catalysed reaction is a D-aminoacyl-tRNA + H2O = a tRNA + a D-alpha-amino acid + H(+). It carries out the reaction glycyl-tRNA(Ala) + H2O = tRNA(Ala) + glycine + H(+). Functionally, D-aminoacyl-tRNA deacylase with broad substrate specificity. By recycling D-aminoacyl-tRNA to D-amino acids and free tRNA molecules, this enzyme counteracts the toxicity associated with the formation of D-aminoacyl-tRNA entities in vivo. This Hyperthermus butylicus (strain DSM 5456 / JCM 9403 / PLM1-5) protein is D-aminoacyl-tRNA deacylase.